We begin with the raw amino-acid sequence, 32 residues long: U13-ctenitoxin-Pn1a (32 aa).

Disulfide bonds link Cys3–Cys17, Cys10–Cys21, and Cys16–Cys30.

As to expression, expressed by the venom gland.

The protein localises to the secreted. Its function is as follows. Acts as a neurotoxin. In Phoneutria nigriventer (Brazilian armed spider), this protein is U13-ctenitoxin-Pn1a.